The primary structure comprises 913 residues: Vacuolar membrane protease (913 aa).

The Cytoplasmic portion of the chain corresponds to M1–T15. A helical transmembrane segment spans residues T16–A36. Over N37–Y364 the chain is Vacuolar. A glycan (N-linked (GlcNAc...) asparagine) is linked at N117. Residues H152 and D164 each coordinate Zn(2+). The active-site Proton acceptor is E196. Residues E197, E222, and H296 each coordinate Zn(2+). A helical membrane pass occupies residues V365 to C385. Residues N386–P394 lie on the Cytoplasmic side of the membrane. The chain crosses the membrane as a helical span at residues T395–F415. At T416–N431 the chain is on the vacuolar side. Residues F432–A452 form a helical membrane-spanning segment. The Cytoplasmic segment spans residues L453 to T465. The helical transmembrane segment at L466–L486 threads the bilayer. Topologically, residues S487–T494 are vacuolar. Residues G495–C515 traverse the membrane as a helical segment. At S516–Y600 the chain is on the cytoplasmic side. A compositionally biased stretch (basic and acidic residues) spans N540–E552. The disordered stretch occupies residues N540 to S578. Positions T557 to P566 are enriched in polar residues. Positions S567–S578 are enriched in low complexity. The chain crosses the membrane as a helical span at residues L601 to A621. At L622–E634 the chain is on the vacuolar side. A helical membrane pass occupies residues A635–T655. Residues T656–R660 are Cytoplasmic-facing. A helical membrane pass occupies residues F661–A681. Residues P682–L913 are Vacuolar-facing. N729, N794, and N810 each carry an N-linked (GlcNAc...) asparagine glycan.

Belongs to the peptidase M28 family. Zn(2+) serves as cofactor.

It localises to the vacuole membrane. In terms of biological role, may be involved in vacuolar sorting and osmoregulation. This is Vacuolar membrane protease from Kluyveromyces lactis (strain ATCC 8585 / CBS 2359 / DSM 70799 / NBRC 1267 / NRRL Y-1140 / WM37) (Yeast).